The sequence spans 427 residues: Anaerobic glycerol-3-phosphate dehydrogenase subunit B (427 aa).

Belongs to the anaerobic G-3-P dehydrogenase subunit B family. In terms of assembly, composed of a catalytic GlpA/B dimer and of membrane bound GlpC. FMN serves as cofactor.

The enzyme catalyses a quinone + sn-glycerol 3-phosphate = dihydroxyacetone phosphate + a quinol. It participates in polyol metabolism; glycerol degradation via glycerol kinase pathway; glycerone phosphate from sn-glycerol 3-phosphate (anaerobic route): step 1/1. In terms of biological role, conversion of glycerol 3-phosphate to dihydroxyacetone. Uses fumarate or nitrate as electron acceptor. This is Anaerobic glycerol-3-phosphate dehydrogenase subunit B from Glaesserella parasuis serovar 5 (strain SH0165) (Haemophilus parasuis).